The following is a 962-amino-acid chain: Phenylalanine--tRNA ligase beta subunit (962 aa).

One can recognise a tRNA-binding domain in the interval 85–201 (TIRWCKVRVC…AEVFQGDELS (117 aa)). The 83-residue stretch at 456–538 (TQQSPILLST…RVIGFNRIPS (83 aa)) folds into the B5 domain. Mg(2+) contacts are provided by Asp516, Asp522, Glu525, and Glu526. Residues 621–675 (PDSTHNPDSGSDPIIPTGVTRITEPGSSGVSGPGNVGVKEKCSADTSIEHAPTTR) are insert. Residues 870–961 (PTSPAATQHL…ASSKFGAIMR (92 aa)) enclose the FDX-ACB domain.

The protein belongs to the phenylalanyl-tRNA synthetase beta subunit family. Type 1 subfamily. Tetramer of two alpha and two beta subunits. Mg(2+) is required as a cofactor.

Its subcellular location is the cytoplasm. It catalyses the reaction tRNA(Phe) + L-phenylalanine + ATP = L-phenylalanyl-tRNA(Phe) + AMP + diphosphate + H(+). This chain is Phenylalanine--tRNA ligase beta subunit, found in Tropheryma whipplei (strain Twist) (Whipple's bacillus).